The following is an 82-amino-acid chain: Small ribosomal subunit protein bS16 (82 aa).

This sequence belongs to the bacterial ribosomal protein bS16 family.

This is Small ribosomal subunit protein bS16 from Edwardsiella ictaluri (strain 93-146).